We begin with the raw amino-acid sequence, 75 residues long: U6-lycotoxin-Ls1e (75 aa).

Residues methionine 1–alanine 21 form the signal peptide. Residues glutamate 22–arginine 25 constitute a propeptide that is removed on maturation.

Belongs to the neurotoxin 19 (CSTX) family. 06 (U6-Lctx) subfamily. In terms of processing, contains 4 disulfide bonds. As to expression, expressed by the venom gland.

It localises to the secreted. This chain is U6-lycotoxin-Ls1e, found in Lycosa singoriensis (Wolf spider).